The sequence spans 509 residues: Poly(A) RNA polymerase GLD2-A (509 aa).

A disordered region spans residues 88 to 107 (PGSPSSSFQNRKRRSDEGNV). Mg(2+)-binding residues include Asp-240 and Asp-242. The PAP-associated domain occupies 409–462 (LGDLLLGFLKYFAVEFDWSKDIISVREGKALPRSDDYLWRNKYICVEEPFDGTN).

This sequence belongs to the DNA polymerase type-B-like family. GLD2 subfamily. As to quaternary structure, component of a complex at least composed of cpeb1, cpsf1, tent2/gld2, pabpc1/ePAB, parn and sympk. Following oocyte maturation, parn is expelled from the complex. Interacts with rbfox2 and sympk. It depends on Mg(2+) as a cofactor. Requires Mn(2+) as cofactor.

It localises to the cytoplasm. The catalysed reaction is RNA(n) + ATP = RNA(n)-3'-adenine ribonucleotide + diphosphate. Cytoplasmic poly(A) RNA polymerase that adds successive AMP monomers to the 3'-end of specific RNAs, forming a poly(A) tail. In contrast to the canonical nuclear poly(A) RNA polymerase, it only adds poly(A) to selected cytoplasmic mRNAs during oocyte maturation. Plays a central role during oocyte maturation by mediating polyadenylation of dormant mRNAs, which contain 5'AAUAAA-3' sequence in their 3'UTR. In immature oocytes, polyadenylation of poly(A) tails is counteracted by the ribonuclease parn. During maturation parn is excluded from the ribonucleoprotein complex, allowing poly(A) elongation and activation of mRNAs. May not play a role in replication-dependent histone mRNA degradation. The chain is Poly(A) RNA polymerase GLD2-A (tent2-a) from Xenopus laevis (African clawed frog).